The chain runs to 203 residues: EVTKPETINYRTLKPEMDGLFCERIFGPAKDWECHCGKYKRVRYKGIVCERCGVEVTESKVRRHRMGYIKLAAPVTHVWYLKGIPSYMSIILDMPLRDVEQIVYFNAYVVLDPGNAQNLSYKQLLTEDQWLEIEEQIYGEDSELLGIEVGIGAEAVKRLLEEVDKTSEAEKLRSEIANCKGQKRAKLIKRLRVIDNFVATGSR.

Zn(2+) contacts are provided by cysteine 34, cysteine 36, cysteine 49, and cysteine 52.

It belongs to the RNA polymerase beta' chain family. RpoC1 subfamily. In cyanobacteria the RNAP catalytic core is composed of 2 alpha, 1 beta, 1 beta', 1 gamma and 1 omega subunit. When a sigma factor is associated with the core the holoenzyme is formed, which can initiate transcription. Zn(2+) is required as a cofactor.

The catalysed reaction is RNA(n) + a ribonucleoside 5'-triphosphate = RNA(n+1) + diphosphate. DNA-dependent RNA polymerase catalyzes the transcription of DNA into RNA using the four ribonucleoside triphosphates as substrates. In Prochloron sp, this protein is DNA-directed RNA polymerase subunit gamma (rpoC1).